We begin with the raw amino-acid sequence, 281 residues long: MTDRYAVFGHPVAHSKSPQIHATFGRQEGIAVDYRAIDLAPDAFLAGLEAFAADGGVGANVTSPHKEAAFSVCTTLTARARRAGSVNTLLRKGDRWHGDTTDGIGLVRDLTDRHGLDLRGRRMLLIGAGGSARSVAPAFLDAGITELVVVNRTPERADELIDAMGEPGRAISRYWEDLRELGDFELIVNATSAGRDRDVEFKLPLSLVNSMTTAVDLNYGEAAIAFLAWARAANCRNTVDGLGMLVEQAAESFLQWHGVRPQTDEVYQTLRQGAAVLAGED.

Residues 15–17 (SKS) and T62 contribute to the shikimate site. Residue K66 is the Proton acceptor of the active site. N87 and D102 together coordinate shikimate. NADP(+)-binding positions include 127 to 131 (GAGGS), 151 to 156 (NRTPER), and L217. Y219 provides a ligand contact to shikimate. G241 is a binding site for NADP(+).

It belongs to the shikimate dehydrogenase family. Homodimer.

It carries out the reaction shikimate + NADP(+) = 3-dehydroshikimate + NADPH + H(+). It participates in metabolic intermediate biosynthesis; chorismate biosynthesis; chorismate from D-erythrose 4-phosphate and phosphoenolpyruvate: step 4/7. Its function is as follows. Involved in the biosynthesis of the chorismate, which leads to the biosynthesis of aromatic amino acids. Catalyzes the reversible NADPH linked reduction of 3-dehydroshikimate (DHSA) to yield shikimate (SA). The polypeptide is Shikimate dehydrogenase (NADP(+)) (Stenotrophomonas maltophilia (strain R551-3)).